A 35-amino-acid polypeptide reads, in one-letter code: Beta/omega-theraphotoxin-Bp1a (35 aa).

3 disulfides stabilise this stretch: Cys2–Cys16, Cys9–Cys21, and Cys15–Cys28.

The protein belongs to the neurotoxin 10 (Hwtx-1) family. 54 (ProTx-1) subfamily. Post-translationally, an unnatural amidation at Ser-35 provokes a 14-fold increased toxin ability to inhibit Nav1.2/SCN2A and a ~2-fold decreased toxin ability to inhibit both Nav1.5/SCN5A and Nav1.7/SCN9A. As to expression, expressed by the venom gland.

The protein localises to the secreted. In terms of biological role, ion channel impairing toxin that inhibits voltage-gated calcium channel Cav3.1/CACNA1G (IC(50)=53 nM), voltage-gated potassium channels Kv2.1/KCNB1 (IC(50)=411 nM), all sodium channels tested (Nav1.2/SCN2A (IC(50)=60-104 nM), Nav1.5/SCN5A (IC(50)=76-358 nM), Nav1.6/SCN8A (IC(50)=21-133 nM), Nav1.7/SCN9A (IC(50)=51-95 nM), and Nav1.8/SCN10A) as well as the nociceptor cation channel TRPA1 (IC(50)=389 nM). Acts as a potent and selective blocker of voltage-gated calcium channel Cav3.1/CACNA1G, but not of Cav3.2/CACNA1H, and Cav3.3/CACNA1I. On Nav1.7/SCN9A, primarily interacts with the DII and DIV voltage-sensor domains. Also acts as an inhibitor of nociceptor cation channel TRPA1 (IC(50)~389 nM) by binding to the S1-S4 gating domain of TRPA1. It shows moderate affinity for lipid bilayers. In Bumba pulcherrimaklaasi (Tarantula spider), this protein is Beta/omega-theraphotoxin-Bp1a.